The chain runs to 130 residues: Annexin A1 (130 aa).

Gln19 participates in a covalent cross-link: Isoglutamyl lysine isopeptide (Gln-Lys) (interchain with K-?). Ser24 is subject to Phosphoserine; by PKC. 2 Annexin repeats span residues 37-108 (FDPS…ALLK) and 109-130 (TPAQ…TDRR). Gly54, Val55, Glu57, Lys92, Leu95, Glu100, Met122, Gly124, Gly126, Thr127, and Arg130 together coordinate Ca(2+).

This sequence belongs to the annexin family.

The protein resides in the nucleus. Its subcellular location is the cytoplasm. It localises to the cell projection. The protein localises to the cilium. It is found in the basolateral cell membrane. The protein resides in the lateral cell membrane. Its subcellular location is the cell membrane. It localises to the apical cell membrane. The protein localises to the membrane. It is found in the early endosome. The protein resides in the cytoplasmic vesicle membrane. Its subcellular location is the endosome membrane. It localises to the secreted. The protein localises to the extracellular space. It is found in the extracellular exosome. The protein resides in the cytoplasmic vesicle. Its subcellular location is the secretory vesicle lumen. It localises to the phagocytic cup. Functionally, plays important roles in the innate immune response as effector of glucocorticoid-mediated responses and regulator of the inflammatory process. Has anti-inflammatory activity. Plays a role in glucocorticoid-mediated down-regulation of the early phase of the inflammatory response. Promotes resolution of inflammation and wound healing. Functions at least in part by activating the formyl peptide receptors and downstream signaling cascades. Promotes chemotaxis of granulocytes and monocytes via activation of the formyl peptide receptors. Contributes to the adaptive immune response by enhancing signaling cascades that are triggered by T-cell activation, regulates differentiation and proliferation of activated T-cells. Promotes the differentiation of T-cells into Th1 cells and negatively regulates differentiation into Th2 cells. Has no effect on unstimulated T-cells. Promotes rearrangement of the actin cytoskeleton, cell polarization and cell migration. Negatively regulates hormone exocytosis via activation of the formyl peptide receptors and reorganization of the actin cytoskeleton. Has high affinity for Ca(2+) and can bind up to eight Ca(2+) ions. Displays Ca(2+)-dependent binding to phospholipid membranes. Plays a role in the formation of phagocytic cups and phagosomes. Plays a role in phagocytosis by mediating the Ca(2+)-dependent interaction between phagosomes and the actin cytoskeleton. This is Annexin A1 (ANXA1) from Gallus gallus (Chicken).